Reading from the N-terminus, the 338-residue chain is D-alanine--D-alanine ligase (338 aa).

The 205-residue stretch at 120-324 folds into the ATP-grasp domain; the sequence is KRVMLAEGLP…YEDLCIEVLK (205 aa). 150-205 is a binding site for ATP; sequence PDKLGLPLIVKPAREGSSIGLTKVTERAGMADAVAQAEKLDADILCEQFISGDEVT. Mg(2+) contacts are provided by Asp-277, Glu-291, and Asn-293.

This sequence belongs to the D-alanine--D-alanine ligase family. It depends on Mg(2+) as a cofactor. Mn(2+) serves as cofactor.

The protein resides in the cytoplasm. It carries out the reaction 2 D-alanine + ATP = D-alanyl-D-alanine + ADP + phosphate + H(+). It participates in cell wall biogenesis; peptidoglycan biosynthesis. In terms of biological role, cell wall formation. This chain is D-alanine--D-alanine ligase, found in Polaromonas sp. (strain JS666 / ATCC BAA-500).